The following is a 276-amino-acid chain: Hydroxyethylthiazole kinase (276 aa).

Met-48 is a binding site for substrate. The ATP site is built by Arg-124 and Thr-175. Residue Gly-202 participates in substrate binding.

It belongs to the Thz kinase family. The cofactor is Mg(2+).

It carries out the reaction 5-(2-hydroxyethyl)-4-methylthiazole + ATP = 4-methyl-5-(2-phosphooxyethyl)-thiazole + ADP + H(+). Its pathway is cofactor biosynthesis; thiamine diphosphate biosynthesis; 4-methyl-5-(2-phosphoethyl)-thiazole from 5-(2-hydroxyethyl)-4-methylthiazole: step 1/1. Functionally, catalyzes the phosphorylation of the hydroxyl group of 4-methyl-5-beta-hydroxyethylthiazole (THZ). The sequence is that of Hydroxyethylthiazole kinase from Clostridium beijerinckii (strain ATCC 51743 / NCIMB 8052) (Clostridium acetobutylicum).